The primary structure comprises 656 residues: MKTDGNTTLDTTISMEELERTVKSAYEALAKDQQDDGHWIYELEADVTIPAQFILLEHTLDKIDEELEQKIANYLRRCQSREHWGWPVYYGGEFNISASVQAYFALKMTGEDINAPHMVRAREAILAHGGPEYANVFTRIQLSLFGEASWLATPFMPVEIMLLPRWMYFSIWNMSYWSRTTVAPLLIVADLKPKAINPRNVHIPELFPTPPDKVKTWIHGPFRSKWGHVFKFIDTAIRPFTRFVPSFLHKKAYKAALDFIEPRLNGVDGLGAIYPPMSYSAVMYRALGIPDDDPRAATNWEALKGLLVIKEREAYCQACVSPVWDTALSGHALMEASFGPDGINADRTEKLIDRAAHWLRAHQVLNVVGDWAINNPNLQPGGWAFQYGNDYYPDVDDTAVAAMLLHRQNLPENEEALDRARKWIIGMQSSNGGWGAFDIDNDKQILNDIPFADHGALLDPPTADVSARCISLLAELGHPEDRPVIERGIKYLRKEQEEDGSWFGRWGTNYIYGAWSVLCAFNASGVPHDDPSVLKCVNFLKSVQREDGGWGESCETYEGSAHGVYTESLPSQTAWAVLGLMASGRRTDPAVKRGIVWLIQHQQDNGEWAEEPFNAVGFPRMFYLHYLGYKQFFPLLALARYRHMEKSGTNNVSFAF.

The stretch at 68–110 is one PFTB 1 repeat; that stretch reads EQKIANYLRRCQSREHWGWPVYYGGEFNISASVQAYFALKMTG. D396 functions as the Proton donor in the catalytic mechanism. PFTB repeat units lie at residues 417 to 459, 485 to 525, 533 to 582, and 591 to 634; these read LDRA…ALLD, IERG…NASG, VLKC…GLMA, and VKRG…QFFP.

This sequence belongs to the terpene cyclase/mutase family.

The catalysed reaction is squalene = hop-22(29)-ene. It catalyses the reaction squalene + H2O = hopan-22-ol. In terms of biological role, squalene cyclase that catalyzes the oxygen-independent cyclization of squalene into hopanoids, a class of cyclic triterpenoids including hop-22(29)-ene, hop-17(21)-ene, hop-21(22)-ene, and hopan-22-ol. This Schizosaccharomyces japonicus (strain yFS275 / FY16936) (Fission yeast) protein is Squalene-hopene cyclase.